The chain runs to 230 residues: Geranylgeranylglyceryl phosphate synthase (230 aa).

Position 13 (lysine 13) interacts with sn-glycerol 1-phosphate. The Mg(2+) site is built by aspartate 15 and threonine 41. Sn-glycerol 1-phosphate contacts are provided by residues 161 to 166 (YIEYSG), glycine 191, and 211 to 212 (GN).

This sequence belongs to the GGGP/HepGP synthase family. Group I subfamily. Mg(2+) is required as a cofactor.

It is found in the cytoplasm. The catalysed reaction is sn-glycerol 1-phosphate + (2E,6E,10E)-geranylgeranyl diphosphate = sn-3-O-(geranylgeranyl)glycerol 1-phosphate + diphosphate. The protein operates within membrane lipid metabolism; glycerophospholipid metabolism. In terms of biological role, prenyltransferase that catalyzes the transfer of the geranylgeranyl moiety of geranylgeranyl diphosphate (GGPP) to the C3 hydroxyl of sn-glycerol-1-phosphate (G1P). This reaction is the first ether-bond-formation step in the biosynthesis of archaeal membrane lipids. The sequence is that of Geranylgeranylglyceryl phosphate synthase from Methanoculleus marisnigri (strain ATCC 35101 / DSM 1498 / JR1).